Consider the following 219-residue polypeptide: uncharacterized protein (219 aa).

Residue S23 is modified to Phosphoserine. K137 is covalently cross-linked (Glycyl lysine isopeptide (Lys-Gly) (interchain with G-Cter in SUMO)).

Its subcellular location is the cytoplasm. This is an uncharacterized protein from Saccharomyces cerevisiae (strain ATCC 204508 / S288c) (Baker's yeast).